The chain runs to 237 residues: Ubiquinone/menaquinone biosynthesis C-methyltransferase UbiE (237 aa).

S-adenosyl-L-methionine is bound by residues Thr60 and Asp80.

The protein belongs to the class I-like SAM-binding methyltransferase superfamily. MenG/UbiE family.

The enzyme catalyses a 2-demethylmenaquinol + S-adenosyl-L-methionine = a menaquinol + S-adenosyl-L-homocysteine + H(+). The catalysed reaction is a 2-methoxy-6-(all-trans-polyprenyl)benzene-1,4-diol + S-adenosyl-L-methionine = a 5-methoxy-2-methyl-3-(all-trans-polyprenyl)benzene-1,4-diol + S-adenosyl-L-homocysteine + H(+). It participates in quinol/quinone metabolism; menaquinone biosynthesis; menaquinol from 1,4-dihydroxy-2-naphthoate: step 2/2. Its pathway is cofactor biosynthesis; ubiquinone biosynthesis. Methyltransferase required for the conversion of demethylmenaquinol (DMKH2) to menaquinol (MKH2) and the conversion of 2-polyprenyl-6-methoxy-1,4-benzoquinol (DDMQH2) to 2-polyprenyl-3-methyl-6-methoxy-1,4-benzoquinol (DMQH2). This is Ubiquinone/menaquinone biosynthesis C-methyltransferase UbiE from Syntrophotalea carbinolica (strain DSM 2380 / NBRC 103641 / GraBd1) (Pelobacter carbinolicus).